Consider the following 183-residue polypeptide: Ribosome-recycling factor (183 aa).

The protein belongs to the RRF family.

It is found in the cytoplasm. Its function is as follows. Responsible for the release of ribosomes from messenger RNA at the termination of protein biosynthesis. May increase the efficiency of translation by recycling ribosomes from one round of translation to another. This is Ribosome-recycling factor from Acetivibrio thermocellus (strain ATCC 27405 / DSM 1237 / JCM 9322 / NBRC 103400 / NCIMB 10682 / NRRL B-4536 / VPI 7372) (Clostridium thermocellum).